The following is a 478-amino-acid chain: Ribosomal RNA small subunit methyltransferase F (478 aa).

S-adenosyl-L-methionine is bound by residues 121 to 127 (ASAPGSK), glutamate 145, aspartate 172, and aspartate 190. Catalysis depends on cysteine 243, which acts as the Nucleophile.

The protein belongs to the class I-like SAM-binding methyltransferase superfamily. RsmB/NOP family.

It is found in the cytoplasm. It carries out the reaction cytidine(1407) in 16S rRNA + S-adenosyl-L-methionine = 5-methylcytidine(1407) in 16S rRNA + S-adenosyl-L-homocysteine + H(+). Its function is as follows. Specifically methylates the cytosine at position 1407 (m5C1407) of 16S rRNA. The polypeptide is Ribosomal RNA small subunit methyltransferase F (Shewanella sediminis (strain HAW-EB3)).